The sequence spans 98 residues: NADH-ubiquinone oxidoreductase chain 4L (98 aa).

The next 3 membrane-spanning stretches (helical) occupy residues 2–22 (PSIFTNIILAFATALLGTLVF), 29–49 (SLLCLEGMMLSMFVLSTLIIL), and 61–81 (ILLLVFAACEAAVGLALLVMV).

This sequence belongs to the complex I subunit 4L family. Core subunit of respiratory chain NADH dehydrogenase (Complex I) which is composed of 45 different subunits.

It localises to the mitochondrion inner membrane. The catalysed reaction is a ubiquinone + NADH + 5 H(+)(in) = a ubiquinol + NAD(+) + 4 H(+)(out). Core subunit of the mitochondrial membrane respiratory chain NADH dehydrogenase (Complex I) which catalyzes electron transfer from NADH through the respiratory chain, using ubiquinone as an electron acceptor. Part of the enzyme membrane arm which is embedded in the lipid bilayer and involved in proton translocation. The sequence is that of NADH-ubiquinone oxidoreductase chain 4L (MT-ND4L) from Propithecus diadema diadema (Diademed sifaka).